Here is a 1103-residue protein sequence, read N- to C-terminus: Voltage-dependent calcium channel subunit alpha-2/delta-1 (1103 aa).

Positions 1 to 24 (MAAGCLLALTLTLFQSGLIGPSSE) are cleaved as a signal peptide. Topologically, residues 25–1073 (EPFPSPVTIK…VLEDYTDCGG (1049 aa)) are extracellular. A glycan (N-linked (GlcNAc...) asparagine) is linked at Asn92. At Ser119 the chain carries Phosphoserine. Residues Asn136 and Asn184 are each glycosylated (N-linked (GlcNAc...) asparagine). Positions 253-430 (DMLILVDVSG…INTQEYLDVL (178 aa)) constitute a VWFA domain. A divalent metal cation is bound by residues Asp259, Ser261, and Ser263. Positions 259–263 (DVSGS) match the MIDAS-like motif motif. N-linked (GlcNAc...) asparagine glycans are attached at residues Asn324 and Asn348. Cys404 and Cys1059 are disulfide-bonded. Positions 446–537 (WTNVYLDALE…QPKPIGVGIP (92 aa)) constitute a Cache domain. N-linked (GlcNAc...) asparagine glycosylation is found at Asn613, Asn781, and Asn888. Residues 1074-1094 (VSGLNPSLWSIFGLQFILLWL) traverse the membrane as a helical segment. Topologically, residues 1095–1103 (VSGSRHYLL) are cytoplasmic.

The protein belongs to the calcium channel subunit alpha-2/delta family. As to quaternary structure, dimer formed of alpha-2-1 and delta-1 chains; disulfide-linked. Voltage-dependent calcium channels are multisubunit complexes, consisting of alpha-1 (CACNA1), alpha-2 (CACNA2D), beta (CACNB) and delta (CACNA2D) subunits in a 1:1:1:1 ratio. Post-translationally, proteolytically processed into subunits alpha-2-1 and delta-1 that are disulfide-linked. As to expression, isoform 2A is expressed in skeletal muscle and aorta. Isoform 2B is expressed in brain. Isoform 2C is expressed in heart. Isoform 2D is expressed in heart and smooth muscle. Isoform 2E is expressed in smooth muscle. All five isoforms are expressed in the cardiovascular system.

The protein resides in the membrane. It is found in the cell membrane. Functionally, the alpha-2/delta subunit of voltage-dependent calcium channels regulates calcium current density and activation/inactivation kinetics of the calcium channel. Plays an important role in excitation-contraction coupling. The protein is Voltage-dependent calcium channel subunit alpha-2/delta-1 (Cacna2d1) of Mus musculus (Mouse).